Reading from the N-terminus, the 328-residue chain is Cytochrome c biogenesis protein CcsA (328 aa).

8 helical membrane-spanning segments follow: residues 13–33, 46–66, 73–93, 101–121, 146–166, 234–254, 263–283, and 295–315; these read ISFSVVSIVMTIYFLTLLVNL, GIIITFFSITGFLFTRWIFSG, LYESLIFLSWAFSIIHMISFF, LNAITAPSAIFIQGFATSGLL, MVLGYGALLCGSLLSIALLVI, IISLGFLFLTIGILSGAVWAN, WDPKETWAFITWTIFAIYLHI, and AIVASIGFLVIWICYFGVNLL.

The protein belongs to the CcmF/CycK/Ccl1/NrfE/CcsA family. As to quaternary structure, may interact with Ccs1.

Its subcellular location is the plastid. It is found in the chloroplast thylakoid membrane. In terms of biological role, required during biogenesis of c-type cytochromes (cytochrome c6 and cytochrome f) at the step of heme attachment. In Aethionema grandiflorum (Persian stone-cress), this protein is Cytochrome c biogenesis protein CcsA.